The primary structure comprises 60 residues: Small, acid-soluble spore protein H 2 (60 aa).

The segment at 38–60 is disordered; that stretch reads TIHPLDNPSQKQSVPVASLEEHS.

The protein belongs to the SspH family.

It is found in the spore core. This is Small, acid-soluble spore protein H 2 from Geobacillus thermodenitrificans (strain NG80-2).